The following is a 668-amino-acid chain: UvrABC system protein B (668 aa).

One can recognise a Helicase ATP-binding domain in the interval N25 to P413. Position 38 to 45 (G38 to T45) interacts with ATP. A Beta-hairpin motif is present at residues Y91–V114. The region spanning Q429–L595 is the Helicase C-terminal domain. Positions T629–K664 constitute a UVR domain.

It belongs to the UvrB family. In terms of assembly, forms a heterotetramer with UvrA during the search for lesions. Interacts with UvrC in an incision complex.

The protein localises to the cytoplasm. Functionally, the UvrABC repair system catalyzes the recognition and processing of DNA lesions. A damage recognition complex composed of 2 UvrA and 2 UvrB subunits scans DNA for abnormalities. Upon binding of the UvrA(2)B(2) complex to a putative damaged site, the DNA wraps around one UvrB monomer. DNA wrap is dependent on ATP binding by UvrB and probably causes local melting of the DNA helix, facilitating insertion of UvrB beta-hairpin between the DNA strands. Then UvrB probes one DNA strand for the presence of a lesion. If a lesion is found the UvrA subunits dissociate and the UvrB-DNA preincision complex is formed. This complex is subsequently bound by UvrC and the second UvrB is released. If no lesion is found, the DNA wraps around the other UvrB subunit that will check the other stand for damage. In Francisella tularensis subsp. tularensis (strain SCHU S4 / Schu 4), this protein is UvrABC system protein B.